Consider the following 200-residue polypeptide: 5'(3')-deoxyribonucleotidase, cytosolic type (200 aa).

Residue aspartate 12 is the Nucleophile of the active site. Residues aspartate 12 and aspartate 14 each contribute to the Mg(2+) site. Aspartate 14 serves as the catalytic Proton donor. Substrate contacts are provided by phenylalanine 20, phenylalanine 46, tyrosine 67, and threonine 101. At threonine 102 the chain carries Phosphothreonine. Lysine 136 serves as a coordination point for substrate. Residue aspartate 147 coordinates Mg(2+). Serine 184 is modified (phosphoserine).

This sequence belongs to the 5'(3')-deoxyribonucleotidase family. Homodimer. Requires Mg(2+) as cofactor.

It localises to the cytoplasm. Dephosphorylates the 5' and 2'(3')-phosphates of deoxyribonucleotides, with a preference for dUMP and dTMP, intermediate activity towards dGMP, and low activity towards dCMP and dAMP. In Mus musculus (Mouse), this protein is 5'(3')-deoxyribonucleotidase, cytosolic type (Nt5c).